A 501-amino-acid polypeptide reads, in one-letter code: MPSANASRRSQEKPREIMDAAEDYAKERYGVSSMIQSQEKPDRVLVRISDLTVQKAGEVVWVRARVHTSRAKGKQCFLVLRQQQFNVQALVAVGDHASKQMVKFAANINKESIVDVEGVVRKVNQKIGSCTQQDVELHVQKIYVISSAEPRLPLQLDDAVRPEVEGEEEGRATVNQDTRLDNRVIDLRTSTSQAIFRLQSGICHPFRETLTNKGFVEIQTPKIISAASEGGANVFTVSYFKNNAYLAQSPQLYKQMCICADFEKVFCIGPVFRAEDSNTHRHLTEFVGLDIEMAFNYHYHEVVEEIADTLVQIFKGLQKRFQTEIQTVNKQFPCEPFKFLEPTLRLEYCEALAMLREAGIEMGDEEDLSTPNEKLLGRLVKEKYDTDFYILDKYPLAVRPFYTMPDPRNPKQSNSYDMFMRGEEILSGAQRIHDPQLVTERALHHGIDLEKIKAYIDSFRFGAPPHAGGGIGLERVTMLFLGLHNVRQTSMFPRDPKRLTP.

Position 52 is a phosphothreonine (Thr-52). The residue at position 74 (Lys-74) is an N6-acetyllysine. L-aspartate is bound at residue Glu-229. The residue at position 249 (Ser-249) is a Phosphoserine. The tract at residues 251-254 is aspartate; sequence QLYK. An L-aspartate-binding site is contributed by Arg-273. Residues 273–275 and 281–283 each bind ATP; these read RAE and RHL. Lys-374 is modified (N6-acetyllysine). The binding site for the 3'-end of tRNA stretch occupies residues 411-415; it reads KQSNS. ATP is bound at residue Glu-424. Residues Ser-427 and Arg-431 each coordinate L-aspartate. Position 472-475 (472-475) interacts with ATP; sequence GLER. Thr-500 bears the Phosphothreonine; by PKA mark.

It belongs to the class-II aminoacyl-tRNA synthetase family. Type 2 subfamily. As to quaternary structure, homodimer. Part of a multisubunit complex that groups tRNA ligases for Arg (RARS1), Asp (DARS1), Gln (QARS1), Ile (IARS1), Leu (LARS1), Lys (KARS1), Met (MARS1) the bifunctional ligase for Glu and Pro (EPRS1) and the auxiliary subunits AIMP1/p43, AIMP2/p38 and EEF1E1/p18.

Its subcellular location is the cytoplasm. It carries out the reaction tRNA(Asp) + L-aspartate + ATP = L-aspartyl-tRNA(Asp) + AMP + diphosphate. Its function is as follows. Catalyzes the specific attachment of an amino acid to its cognate tRNA in a 2 step reaction: the amino acid (AA) is first activated by ATP to form AA-AMP and then transferred to the acceptor end of the tRNA. The chain is Aspartate--tRNA ligase, cytoplasmic (DARS1) from Bos taurus (Bovine).